The primary structure comprises 194 residues: Imidazoleglycerol-phosphate dehydratase (194 aa).

Belongs to the imidazoleglycerol-phosphate dehydratase family.

The protein resides in the cytoplasm. The enzyme catalyses D-erythro-1-(imidazol-4-yl)glycerol 3-phosphate = 3-(imidazol-4-yl)-2-oxopropyl phosphate + H2O. It functions in the pathway amino-acid biosynthesis; L-histidine biosynthesis; L-histidine from 5-phospho-alpha-D-ribose 1-diphosphate: step 6/9. The protein is Imidazoleglycerol-phosphate dehydratase of Rubrobacter xylanophilus (strain DSM 9941 / JCM 11954 / NBRC 16129 / PRD-1).